We begin with the raw amino-acid sequence, 397 residues long: Putative protein FAM47D (397 aa).

This sequence belongs to the FAM47 family.

The protein is Putative protein FAM47D (FAM47DP) of Homo sapiens (Human).